A 100-amino-acid polypeptide reads, in one-letter code: NADH-quinone oxidoreductase subunit K (100 aa).

3 helical membrane-spanning segments follow: residues threonine 4–serine 24, leucine 28–alanine 48, and isoleucine 60–valine 80.

This sequence belongs to the complex I subunit 4L family. In terms of assembly, NDH-1 is composed of 13 different subunits. Subunits NuoA, H, J, K, L, M, N constitute the membrane sector of the complex.

The protein resides in the cell inner membrane. It carries out the reaction a quinone + NADH + 5 H(+)(in) = a quinol + NAD(+) + 4 H(+)(out). Its function is as follows. NDH-1 shuttles electrons from NADH, via FMN and iron-sulfur (Fe-S) centers, to quinones in the respiratory chain. The immediate electron acceptor for the enzyme in this species is believed to be ubiquinone. Couples the redox reaction to proton translocation (for every two electrons transferred, four hydrogen ions are translocated across the cytoplasmic membrane), and thus conserves the redox energy in a proton gradient. The chain is NADH-quinone oxidoreductase subunit K from Shewanella woodyi (strain ATCC 51908 / MS32).